Consider the following 237-residue polypeptide: MKSNKKSNHLRAIYRALVIAIGLAVIIVFNYFNRKNNNARSSRRACSCFFSLTGVNLEKIGSFDTGAKLIVLNHQSLLDIIYLEAYHPSNICWIAKKELGEIPFYGHALTDTGMILIDREDKKGIVSLLKACKEKLDQNRPLVIFPEGTRGKGGEKFLPFKQGAKIIAEKFQLKIQPMVLINSIKIFNSKPLEAYKARTRLVMLESYTPDFSSPTWYEELQERMQKEYLKHYHELNA.

The HXXXXD motif signature appears at 74–79; the sequence is HQSLLD.

It belongs to the 1-acyl-sn-glycerol-3-phosphate acyltransferase family.

The protein resides in the cell inner membrane. It carries out the reaction a 1-acyl-sn-glycero-3-phosphate + an acyl-CoA = a 1,2-diacyl-sn-glycero-3-phosphate + CoA. It functions in the pathway phospholipid metabolism; CDP-diacylglycerol biosynthesis; CDP-diacylglycerol from sn-glycerol 3-phosphate: step 2/3. Converts lysophosphatidic acid (LPA) into phosphatidic acid by incorporating acyl moiety at the 2 position. The polypeptide is 1-acyl-sn-glycerol-3-phosphate acyltransferase (plsC) (Helicobacter pylori (strain J99 / ATCC 700824) (Campylobacter pylori J99)).